The chain runs to 120 residues: uncharacterized protein (120 aa).

An N-terminal signal peptide occupies residues 1-19 (MKKIVCAVVALLLTLPAWA).

This is an uncharacterized protein from Salmonella typhimurium (strain LT2 / SGSC1412 / ATCC 700720).